A 92-amino-acid chain; its full sequence is Large ribosomal subunit protein bL27 (92 aa).

A propeptide spanning residues 1 to 9 (MIKANLQLF) is cleaved from the precursor.

The protein belongs to the bacterial ribosomal protein bL27 family. The N-terminus is cleaved by ribosomal processing cysteine protease Prp.

The sequence is that of Large ribosomal subunit protein bL27 from Acetivibrio thermocellus (strain ATCC 27405 / DSM 1237 / JCM 9322 / NBRC 103400 / NCIMB 10682 / NRRL B-4536 / VPI 7372) (Clostridium thermocellum).